Here is a 637-residue protein sequence, read N- to C-terminus: MELKTMPQNGANAGTQHNNNSNNKPDNNEKEAQKKEPERTNWSNGLEFLMSCISVSVGLGNVWRFPFTAYENGGGAFLIPYIIVLFLIGKPMYYLEMIIGQFTSQGTVKIWSICPSFMGVGYGQAFATICIITYYSSLLALTVYYLFVSFQSELPWSYCRDDWVNCVNSRPAEYVETLLTNASSALSRATESATNVTKLQSSSELYFLNVVIKEKSDITDGIGAPDWKLTIALFVSWVVIFLVIMRGVKSSGKAAYFLALFPYVVLFALLGRAVTLEGAVDGIIFFLQPQWGELLNPIVWKEAVVQCFFSLAVGCGPIIMFASYNRFDHGIYRDAMIVTTLDTLTSLLGGITIFAILGNLAHNLKVDNIRDVVRSGTGLAFISYPDAISKFQAVPQLFSALFFFMLFVLGIGSIVALQSTIVTIICDQFKTCKYWKVAMATSICGFLMGLVYVTPGGQWILTLVDFYGGTYVVFILAIFELAGIVWIYGLQNFCDDIEFMSNKKVSLYWRICWSFFTPIMMIVIFIYSMVTISPIKYSDTYFPVAGDVAGWVLFAVGAAQFPLWGWWYIRTHRHDSFSKSFMASLKPSEKWGPSNPETRRDWLLFKSDLAAKRAIQAKSNKMGFFRQKLYNLCGNSN.

Over residues 1 to 17 the composition is skewed to polar residues; the sequence is MELKTMPQNGANAGTQH. The segment at 1 to 39 is disordered; sequence MELKTMPQNGANAGTQHNNNSNNKPDNNEKEAQKKEPER. Residues 1-47 lie on the Cytoplasmic side of the membrane; sequence MELKTMPQNGANAGTQHNNNSNNKPDNNEKEAQKKEPERTNWSNGLE. The segment covering 26–39 has biased composition (basic and acidic residues); the sequence is DNNEKEAQKKEPER. The next 3 membrane-spanning stretches (helical) occupy residues 48-68, 75-95, and 128-148; these read FLMSCISVSVGLGNVWRFPFT, GAFLIPYIIVLFLIGKPMYYL, and TICIITYYSSLLALTVYYLFV. N-linked (GlcNAc...) asparagine glycans are attached at residues asparagine 181 and asparagine 195. 9 helical membrane-spanning segments follow: residues 225 to 245, 254 to 274, 303 to 323, 337 to 357, 397 to 417, 443 to 463, 470 to 490, 515 to 535, and 549 to 569; these read PDWKLTIALFVSWVVIFLVIM, AAYFLALFPYVVLFALLGRAV, AVVQCFFSLAVGCGPIIMFAS, IVTTLDTLTSLLGGITIFAIL, LFSALFFFMLFVLGIGSIVAL, ICGFLMGLVYVTPGGQWILTL, TYVVFILAIFELAGIVWIYGL, FFTPIMMIVIFIYSMVTISPI, and AGWVLFAVGAAQFPLWGWWYI.

The protein belongs to the sodium:neurotransmitter symporter (SNF) (TC 2.A.22) family.

It localises to the membrane. In terms of biological role, unusual broad substrate spectrum amino acid:sodium cotransporter that promotes absorption of the D isomers of essential amino acids. Neutral amino acids are the preferred substrates, especially methionine and phenylalanine. The chain is Sodium-dependent nutrient amino acid transporter 1 from Drosophila virilis (Fruit fly).